Consider the following 356-residue polypeptide: 1-deoxy-D-xylulose 5-phosphate reductoisomerase (356 aa).

NADPH is bound by residues threonine 7, glycine 8, serine 9, isoleucine 10, glycine 31, asparagine 33, and asparagine 111. Position 112 (lysine 112) interacts with 1-deoxy-D-xylulose 5-phosphate. Glutamate 113 contributes to the NADPH binding site. Aspartate 131 contacts Mn(2+). 1-deoxy-D-xylulose 5-phosphate-binding residues include serine 132, glutamate 133, serine 155, and histidine 178. Glutamate 133 provides a ligand contact to Mn(2+). Position 184 (glycine 184) interacts with NADPH. Residues serine 191, asparagine 196, lysine 197, and glutamate 200 each contribute to the 1-deoxy-D-xylulose 5-phosphate site. Glutamate 200 provides a ligand contact to Mn(2+).

It belongs to the DXR family. Requires Mg(2+) as cofactor. The cofactor is Mn(2+).

It carries out the reaction 2-C-methyl-D-erythritol 4-phosphate + NADP(+) = 1-deoxy-D-xylulose 5-phosphate + NADPH + H(+). The protein operates within isoprenoid biosynthesis; isopentenyl diphosphate biosynthesis via DXP pathway; isopentenyl diphosphate from 1-deoxy-D-xylulose 5-phosphate: step 1/6. Functionally, catalyzes the NADPH-dependent rearrangement and reduction of 1-deoxy-D-xylulose-5-phosphate (DXP) to 2-C-methyl-D-erythritol 4-phosphate (MEP). This is 1-deoxy-D-xylulose 5-phosphate reductoisomerase from Campylobacter jejuni subsp. jejuni serotype O:6 (strain 81116 / NCTC 11828).